Consider the following 130-residue polypeptide: Anti-adapter protein IraD (130 aa).

This sequence belongs to the GpW/Gp25 family. IraD subfamily. As to quaternary structure, interacts with RssB.

The protein resides in the cytoplasm. In terms of biological role, inhibits RpoS proteolysis by regulating RssB activity, thereby increasing the stability of the sigma stress factor RpoS during oxidative stress. Its effect on RpoS stability is due to its interaction with RssB, which probably blocks the interaction of RssB with RpoS, and the consequent delivery of the RssB-RpoS complex to the ClpXP protein degradation pathway. This is Anti-adapter protein IraD from Escherichia coli O9:H4 (strain HS).